Reading from the N-terminus, the 507-residue chain is Ribose import ATP-binding protein RbsA (507 aa).

ABC transporter domains lie at 7 to 242 (LEMR…VGRP) and 253 to 497 (IPLG…TGVT). Residue 39 to 46 (GENGAGKS) coordinates ATP.

Belongs to the ABC transporter superfamily. Ribose importer (TC 3.A.1.2.1) family. In terms of assembly, the complex is composed of an ATP-binding protein (RbsA), two transmembrane proteins (RbsC) and a solute-binding protein (RbsB).

Its subcellular location is the cell inner membrane. The catalysed reaction is D-ribose(out) + ATP + H2O = D-ribose(in) + ADP + phosphate + H(+). Functionally, part of the ABC transporter complex RbsABC involved in ribose import. Responsible for energy coupling to the transport system. This Yersinia pestis bv. Antiqua (strain Antiqua) protein is Ribose import ATP-binding protein RbsA.